The sequence spans 88 residues: Small ribosomal subunit protein uS17 (88 aa).

The protein belongs to the universal ribosomal protein uS17 family. As to quaternary structure, part of the 30S ribosomal subunit.

Functionally, one of the primary rRNA binding proteins, it binds specifically to the 5'-end of 16S ribosomal RNA. The protein is Small ribosomal subunit protein uS17 of Brevibacillus brevis (strain 47 / JCM 6285 / NBRC 100599).